A 280-amino-acid chain; its full sequence is Bicarbonate transport system permease protein CmpB (280 aa).

The next 7 membrane-spanning stretches (helical) occupy residues 32-52, 99-119, 126-146, 153-173, 198-218, 219-239, and 251-271; these read PIFG…AGLI, YSLA…QPLL, IFQF…LVAL, AIFV…TEGV, ILIP…IGLA, WLAI…GFFI, and IILA…GIAY. The region spanning 88 to 266 is the ABC transmembrane type-1 domain; sequence TLASLGRVAQ…YIGAVGLLLD (179 aa).

Belongs to the binding-protein-dependent transport system permease family. As to quaternary structure, the complex is composed of two ATP-binding proteins (CmpC and CmpD), a transmembrane protein (CmpB) and a solute-binding protein (CmpA).

The protein localises to the cell inner membrane. Functionally, part of the ABC transporter complex CmpABCD involved in bicarbonate transport. Probably responsible for the translocation of the substrate across the membrane. This chain is Bicarbonate transport system permease protein CmpB (cmpB), found in Synechocystis sp. (strain ATCC 27184 / PCC 6803 / Kazusa).